A 161-amino-acid chain; its full sequence is 6,7-dimethyl-8-ribityllumazine synthase (161 aa).

5-amino-6-(D-ribitylamino)uracil is bound by residues Trp31, 63 to 65, and 85 to 87; these read SFE and VVI. A (2S)-2-hydroxy-3-oxobutyl phosphate-binding site is contributed by 90 to 91; that stretch reads GT. His93 serves as the catalytic Proton donor. Phe118 serves as a coordination point for 5-amino-6-(D-ribitylamino)uracil. (2S)-2-hydroxy-3-oxobutyl phosphate is bound at residue Arg132.

It belongs to the DMRL synthase family.

The enzyme catalyses (2S)-2-hydroxy-3-oxobutyl phosphate + 5-amino-6-(D-ribitylamino)uracil = 6,7-dimethyl-8-(1-D-ribityl)lumazine + phosphate + 2 H2O + H(+). Its pathway is cofactor biosynthesis; riboflavin biosynthesis; riboflavin from 2-hydroxy-3-oxobutyl phosphate and 5-amino-6-(D-ribitylamino)uracil: step 1/2. In terms of biological role, catalyzes the formation of 6,7-dimethyl-8-ribityllumazine by condensation of 5-amino-6-(D-ribitylamino)uracil with 3,4-dihydroxy-2-butanone 4-phosphate. This is the penultimate step in the biosynthesis of riboflavin. In Pseudarthrobacter chlorophenolicus (strain ATCC 700700 / DSM 12829 / CIP 107037 / JCM 12360 / KCTC 9906 / NCIMB 13794 / A6) (Arthrobacter chlorophenolicus), this protein is 6,7-dimethyl-8-ribityllumazine synthase.